Consider the following 331-residue polypeptide: DNA-directed RNA polymerase subunit alpha (331 aa).

Residues 1–233 (MVREKVTVST…DLFIPFLHAE (233 aa)) form an alpha N-terminal domain (alpha-NTD) region. Residues 265-331 (KEIELKYIFI…GILEKHFTID (67 aa)) form an alpha C-terminal domain (alpha-CTD) region.

The protein belongs to the RNA polymerase alpha chain family. As to quaternary structure, in plastids the minimal PEP RNA polymerase catalytic core is composed of four subunits: alpha, beta, beta', and beta''. When a (nuclear-encoded) sigma factor is associated with the core the holoenzyme is formed, which can initiate transcription.

Its subcellular location is the plastid. It is found in the chloroplast. It carries out the reaction RNA(n) + a ribonucleoside 5'-triphosphate = RNA(n+1) + diphosphate. DNA-dependent RNA polymerase catalyzes the transcription of DNA into RNA using the four ribonucleoside triphosphates as substrates. The polypeptide is DNA-directed RNA polymerase subunit alpha (Vitis vinifera (Grape)).